We begin with the raw amino-acid sequence, 347 residues long: 4-hydroxy-tetrahydrodipicolinate reductase 1, chloroplastic (347 aa).

Residues 1-51 (MATNGLMASSSVFLHRPRIAFASRTNQTVGKYGKGRVSFMGIGTRRLPVVL) constitute a chloroplast transit peptide. The residue at position 52 (S52) is an N-acetylserine. Residues 79-84 (GCSGKM), 171-173 (GTT), and 194-197 (SPQM) contribute to the NAD(+) site. The active-site Proton donor/acceptor is H230. The active-site Proton donor is the K234. Residue 239-240 (GT) coordinates (S)-2,3,4,5-tetrahydrodipicolinate.

It belongs to the DapB family.

The protein localises to the plastid. The protein resides in the chloroplast. It catalyses the reaction (S)-2,3,4,5-tetrahydrodipicolinate + NAD(+) + H2O = (2S,4S)-4-hydroxy-2,3,4,5-tetrahydrodipicolinate + NADH + H(+). It carries out the reaction (S)-2,3,4,5-tetrahydrodipicolinate + NADP(+) + H2O = (2S,4S)-4-hydroxy-2,3,4,5-tetrahydrodipicolinate + NADPH + H(+). Its pathway is amino-acid biosynthesis; L-lysine biosynthesis via DAP pathway; (S)-tetrahydrodipicolinate from L-aspartate: step 4/4. Catalyzes the conversion of 4-hydroxy-tetrahydrodipicolinate (HTPA) to tetrahydrodipicolinate. The protein is 4-hydroxy-tetrahydrodipicolinate reductase 1, chloroplastic (DAPB1) of Arabidopsis thaliana (Mouse-ear cress).